Reading from the N-terminus, the 251-residue chain is MLAKRIIPCLDVTNGRVVKGVNFVELKDAGDPVEIARGYNEAGADELTFLDITASSDNRDLILHIVEAVASEVFIPLTVGGGVRAVADVQRLLNAGADKVSINTSAVTNPQLVKDAADRYGSQCIVVAIDAKRVGDHWEVFTHGGRTATGLDAVEWAKKMESLGAGELLLTSMDRDGTKTGFDLELTRAISDAVDVPIVASGGVGTLQHMVDGVREGRADAVLAASIFHFGEYRVDEAKAYMKRHGIEVRL.

Catalysis depends on residues aspartate 11 and aspartate 130.

It belongs to the HisA/HisF family. Heterodimer of HisH and HisF.

Its subcellular location is the cytoplasm. It carries out the reaction 5-[(5-phospho-1-deoxy-D-ribulos-1-ylimino)methylamino]-1-(5-phospho-beta-D-ribosyl)imidazole-4-carboxamide + L-glutamine = D-erythro-1-(imidazol-4-yl)glycerol 3-phosphate + 5-amino-1-(5-phospho-beta-D-ribosyl)imidazole-4-carboxamide + L-glutamate + H(+). Its pathway is amino-acid biosynthesis; L-histidine biosynthesis; L-histidine from 5-phospho-alpha-D-ribose 1-diphosphate: step 5/9. Its function is as follows. IGPS catalyzes the conversion of PRFAR and glutamine to IGP, AICAR and glutamate. The HisF subunit catalyzes the cyclization activity that produces IGP and AICAR from PRFAR using the ammonia provided by the HisH subunit. The chain is Imidazole glycerol phosphate synthase subunit HisF from Thiobacillus denitrificans (strain ATCC 25259 / T1).